The chain runs to 73 residues: UPF0235 protein LA_1736 (73 aa).

Belongs to the UPF0235 family.

The polypeptide is UPF0235 protein LA_1736 (Leptospira interrogans serogroup Icterohaemorrhagiae serovar Lai (strain 56601)).